The chain runs to 419 residues: MFNRIISLFLLLFTGQVIALDLELTQGINSALPIAINSFGSDAAAQEIGNVIENDLTISGQFKIISGPQGANSQSSVSTLRQLGADSVVTGRVNQVGNRIEVSFTLADAVANGNILLTKTFQINANQVRALAHHISDEVYQKLTGERGIFSTRIAYISVQRNGGRSRYSLEVADADGHNPQSLLVSSEPIMSPSWSPNGKSISYVSFEKKKAEIFTVSVETGQRRLITSFPGINGAPAWSPDGQHLAVVLSKSGTPKIYDVDLSSGSMKQLTFGNSIDTEPRYSPDGRSLLFTSGRGGSPQVYRLSLADGQISRVTFEGNYNARASYTPDMKHIVMLHREDRQFNIGVQNTGGGPISNLTFSGLDESPSVSPNSRLVLYATRYQNRGVLGIVSIDGRIRMRLPAREGDVQEPAWSPYLS.

A signal peptide spans 1–19 (MFNRIISLFLLLFTGQVIA).

It belongs to the TolB family. In terms of assembly, the Tol-Pal system is composed of five core proteins: the inner membrane proteins TolA, TolQ and TolR, the periplasmic protein TolB and the outer membrane protein Pal. They form a network linking the inner and outer membranes and the peptidoglycan layer.

Its subcellular location is the periplasm. Functionally, part of the Tol-Pal system, which plays a role in outer membrane invagination during cell division and is important for maintaining outer membrane integrity. The polypeptide is Tol-Pal system protein TolB (Legionella pneumophila (strain Corby)).